We begin with the raw amino-acid sequence, 343 residues long: Methylthioribose-1-phosphate isomerase (343 aa).

Substrate is bound by residues 44–46 (RGA), arginine 85, and glutamine 192. The active-site Proton donor is the aspartate 233. 243-244 (NK) contributes to the substrate binding site.

Belongs to the eIF-2B alpha/beta/delta subunits family. MtnA subfamily.

It catalyses the reaction 5-(methylsulfanyl)-alpha-D-ribose 1-phosphate = 5-(methylsulfanyl)-D-ribulose 1-phosphate. The protein operates within amino-acid biosynthesis; L-methionine biosynthesis via salvage pathway; L-methionine from S-methyl-5-thio-alpha-D-ribose 1-phosphate: step 1/6. Its function is as follows. Catalyzes the interconversion of methylthioribose-1-phosphate (MTR-1-P) into methylthioribulose-1-phosphate (MTRu-1-P). The chain is Methylthioribose-1-phosphate isomerase from Carboxydothermus hydrogenoformans (strain ATCC BAA-161 / DSM 6008 / Z-2901).